A 50-amino-acid polypeptide reads, in one-letter code: Large ribosomal subunit protein bL33 (50 aa).

This sequence belongs to the bacterial ribosomal protein bL33 family.

This chain is Large ribosomal subunit protein bL33, found in Fusobacterium nucleatum subsp. nucleatum (strain ATCC 25586 / DSM 15643 / BCRC 10681 / CIP 101130 / JCM 8532 / KCTC 2640 / LMG 13131 / VPI 4355).